The chain runs to 193 residues: Thioredoxin reductase-like selenoprotein T1a (193 aa).

Residues 1–21 (MRWLPFSALLLWALCLHSASA) form the signal peptide. The cysteinyl-selenocysteine (Cys-Sec) cross-link spans 44-47 (CVSU). A non-standard amino acid (selenocysteine) is located at residue Sec47. A helical membrane pass occupies residues 83–101 (IASFLSMFKLLLIGVIILG).

Belongs to the SelWTH family. Selenoprotein T subfamily. May contain a selenide-sulfide bond between Cys-44 and Sec-47. This bond is speculated to serve as redox-active pair. Expressed in embryonic olfactory vesicles and the photoreceptor cell layer of the embryonic retina. Low level in embryonic epiphysis.

The protein localises to the endoplasmic reticulum membrane. It catalyses the reaction [thioredoxin]-dithiol + NADP(+) = [thioredoxin]-disulfide + NADPH + H(+). Selenoprotein with thioredoxin reductase-like oxidoreductase activity. The protein is Thioredoxin reductase-like selenoprotein T1a of Danio rerio (Zebrafish).